The primary structure comprises 318 residues: GTP 3',8-cyclase (318 aa).

The region spanning 4-218 (KHGRNIDYLR…MSRSDLIPIE (215 aa)) is the Radical SAM core domain. A GTP-binding site is contributed by R13. [4Fe-4S] cluster is bound by residues C20 and C24. Y26 serves as a coordination point for S-adenosyl-L-methionine. C27 contributes to the [4Fe-4S] cluster binding site. R62 provides a ligand contact to GTP. Position 66 (G66) interacts with S-adenosyl-L-methionine. T93 is a binding site for GTP. S117 provides a ligand contact to S-adenosyl-L-methionine. Residue K154 participates in GTP binding. M188 is a binding site for S-adenosyl-L-methionine. Residues C248 and C251 each contribute to the [4Fe-4S] cluster site. 253–255 (KIR) provides a ligand contact to GTP. Residue C265 participates in [4Fe-4S] cluster binding.

Belongs to the radical SAM superfamily. MoaA family. In terms of assembly, monomer and homodimer. [4Fe-4S] cluster is required as a cofactor.

It carries out the reaction GTP + AH2 + S-adenosyl-L-methionine = (8S)-3',8-cyclo-7,8-dihydroguanosine 5'-triphosphate + 5'-deoxyadenosine + L-methionine + A + H(+). The protein operates within cofactor biosynthesis; molybdopterin biosynthesis. In terms of biological role, catalyzes the cyclization of GTP to (8S)-3',8-cyclo-7,8-dihydroguanosine 5'-triphosphate. The sequence is that of GTP 3',8-cyclase from Clostridium acetobutylicum (strain ATCC 824 / DSM 792 / JCM 1419 / IAM 19013 / LMG 5710 / NBRC 13948 / NRRL B-527 / VKM B-1787 / 2291 / W).